Consider the following 221-residue polypeptide: Ras-related protein Rab-28 (221 aa).

Ser-2 is modified (N-acetylserine). A Phosphoserine modification is found at Ser-8. Gly-21, Gly-24, Lys-25, Thr-26, Ser-27, Gly-38, Lys-39, Tyr-41, and Thr-44 together coordinate GTP. Residue Thr-26 participates in Mg(2+) binding. The switch I stretch occupies residues 35-49; it reads ETFGKQYKQTIGLDF. The Mg(2+) site is built by Thr-44 and Asp-68. A switch II region spans residues 68–85; the sequence is DIGGQTIGGKMLDKYIYG. The GTP site is built by Gly-71, Asn-129, Lys-130, Asp-132, Ala-160, and Lys-161. Cys-218 bears the Cysteine methyl ester mark. The S-farnesyl cysteine moiety is linked to residue Cys-218. A propeptide spans 219 to 221 (removed in mature form); the sequence is AVQ.

It belongs to the small GTPase superfamily. Rab family. Interacts (prenylated form) with PDE6D; the interaction promotes RAB28 delivery to the photoreceptor outer segments. Interacts with KCNJ13; the interaction may facilitate cone outer segments phagocytosis. Interacts with RELA; the interaction contributes to RELA transport from cytoplasm to nucleus. The cofactor is Mg(2+). In terms of processing, isoprenylated. In terms of tissue distribution, testis, brain, and to much lower levels heart, skeletal muscle and fat cells. Expressed in the retina.

Its subcellular location is the cell membrane. It localises to the cytoplasm. The protein resides in the cytoskeleton. It is found in the cilium basal body. The protein localises to the nucleus. It carries out the reaction GTP + H2O = GDP + phosphate + H(+). Regulated by guanine nucleotide exchange factors (GEFs) which promote the exchange of bound GDP for free GTP. Regulated by GTPase activating proteins (GAPs) which increase the GTP hydrolysis activity. Inhibited by GDP dissociation inhibitors (GDIs). Functionally, the small GTPases Rab are key regulators of intracellular membrane trafficking, from the formation of transport vesicles to their fusion with membranes. Rabs cycle between an inactive GDP-bound form and an active GTP-bound form that is able to recruit to membranes different sets of downstream effectors directly responsible for vesicle formation, movement, tethering and fusion. RAB28 is required for shedding and phagocytosis of cone cell outer segments (OS) discs in the retina. Also participates in nuclear factor kappa-B p65/RELA nuclear transport in endothelial cells. The sequence is that of Ras-related protein Rab-28 from Rattus norvegicus (Rat).